Here is a 256-residue protein sequence, read N- to C-terminus: MQIKIGEVESKLNEIIEEEGAAYFVLIDPDEKNYRKIANHVKNYADAIIIGGSIGIINLDEVTKEIKEITGLPTILFPGNVDGVTKEADAVLFMSLMNSKNTYWNMTAPTLGALTIKKYGLETLPMAYLGIEPISKTAVGFVGEVNEIPQKKPEIAGIYSLSASYFGMRWVYLEAGSGAEYPVNNEMIGISKKLSGINIIVGGGIRTPEVAYEKVMSGADVIVTGTLTEKDPKAVEEMKKAIKKAGMDKLKMLSKK.

The Mg(2+) site is built by Asp28 and Ser53. Residues 172–178 (YLEAGSG), 203–204 (GG), and 225–226 (GT) each bind sn-glycerol 1-phosphate.

The protein belongs to the GGGP/HepGP synthase family. Group II subfamily. Requires Mg(2+) as cofactor.

It is found in the cytoplasm. The catalysed reaction is sn-glycerol 1-phosphate + (2E,6E,10E)-geranylgeranyl diphosphate = sn-3-O-(geranylgeranyl)glycerol 1-phosphate + diphosphate. The protein operates within membrane lipid metabolism; glycerophospholipid metabolism. In terms of biological role, prenyltransferase that catalyzes the transfer of the geranylgeranyl moiety of geranylgeranyl diphosphate (GGPP) to the C3 hydroxyl of sn-glycerol-1-phosphate (G1P). This reaction is the first ether-bond-formation step in the biosynthesis of archaeal membrane lipids. The polypeptide is Geranylgeranylglyceryl phosphate synthase (Methanococcus maripaludis (strain C6 / ATCC BAA-1332)).